We begin with the raw amino-acid sequence, 318 residues long: Ubiquinol oxidase, mitochondrial (318 aa).

The transit peptide at 1–46 directs the protein to the mitochondrion; it reads MTVMRGLLNGGRYGNRYIWTAISLRHPEVMEGNGLESAVMQWRRML. Residues 143–163 traverse the membrane as a helical segment; the sequence is AMMLETVAAVPGMVGGMLLHL. Fe cation contacts are provided by E147, E186, and H189. The helical transmembrane segment at 205–225 threads the bilayer; that stretch reads LLVLAVQGVFFNSFFVLYVLS. Fe cation is bound by residues E237, E288, and H291.

It belongs to the alternative oxidase family. Homodimer; disulfide-linked. Fe cation is required as a cofactor.

Its subcellular location is the mitochondrion inner membrane. The enzyme catalyses 2 a ubiquinol + O2 = 2 a ubiquinone + 2 H2O. Its function is as follows. Catalyzes the cyanide-resistant oxidation of ubiquinol and the reduction of molecular oxygen to water, but does not translocate protons and consequently is not linked to oxidative phosphorylation. May increase respiration when the cytochrome respiratory pathway is restricted, or in response to low temperatures. This chain is Ubiquinol oxidase, mitochondrial (AOMI 1), found in Mangifera indica (Mango).